Consider the following 393-residue polypeptide: Rubredoxin-NAD(+) reductase (393 aa).

FAD-binding positions include 9–12, 33–34, lysine 42, valine 80, glutamate 162, aspartate 282, valine 294, and lysine 325; these read SGMA and CA.

It belongs to the FAD-dependent oxidoreductase family. As to quaternary structure, homodimer. FAD is required as a cofactor.

The protein resides in the cytoplasm. It carries out the reaction 2 reduced [rubredoxin] + NAD(+) + H(+) = 2 oxidized [rubredoxin] + NADH. It functions in the pathway hydrocarbon metabolism; alkane degradation. Its function is as follows. Involved in the hydrocarbon hydroxylating system, which transfers electrons from NADH to rubredoxin reductase and then through rubredoxin to alkane 1 monooxygenase. This is Rubredoxin-NAD(+) reductase (rubB) from Acinetobacter baylyi (strain ATCC 33305 / BD413 / ADP1).